The chain runs to 287 residues: MSHHPDPPATPPASPPVTIPMLQAWRAEGRRIVMVTAYDAAMARLVDPVVDVILVGDSVGNVCLGFDNTLPVSLAMMNHHVEAVARARPRALLVADMPFLTFHLDLPDTIRNAGGFLQRGAAAVKLEGGAARVPVVEALVACEIPVMGHLGLTPQSVNAMGGFKVQGRAVAQARRIVEDAKRLEDAGCFSLVLEGIPAELAARITEALAIPTIGIGAGPHCAGQVLVLHDLLGLLPGRKAKFVRTYVDGYGLLQAGLAAYAEDVRAGRFPGPEESYALPEAVRAALD.

The Mg(2+) site is built by Asp57 and Asp96. 3-methyl-2-oxobutanoate contacts are provided by residues 57–58 (DS), Asp96, and Lys125. Residue Glu127 coordinates Mg(2+). The Proton acceptor role is filled by Glu194.

Belongs to the PanB family. Homodecamer; pentamer of dimers. The cofactor is Mg(2+).

Its subcellular location is the cytoplasm. It carries out the reaction 3-methyl-2-oxobutanoate + (6R)-5,10-methylene-5,6,7,8-tetrahydrofolate + H2O = 2-dehydropantoate + (6S)-5,6,7,8-tetrahydrofolate. Its pathway is cofactor biosynthesis; (R)-pantothenate biosynthesis; (R)-pantoate from 3-methyl-2-oxobutanoate: step 1/2. In terms of biological role, catalyzes the reversible reaction in which hydroxymethyl group from 5,10-methylenetetrahydrofolate is transferred onto alpha-ketoisovalerate to form ketopantoate. The sequence is that of 3-methyl-2-oxobutanoate hydroxymethyltransferase from Methylobacterium sp. (strain 4-46).